The sequence spans 1471 residues: Myosin-4 (1471 aa).

The Myosin N-terminal SH3-like domain occupies 4–57; sequence EVGTKCWYPHKEQGWIGGEVTKNDFFEGTFHLELKLEDGETVSIETNSFENDDD. The region spanning 71–777 is the Myosin motor domain; that stretch reads ESTDDLTTLS…MLAFLEKLRT (707 aa). Residue 165–172 coordinates ATP; it reads GESGAGKT. The actin-binding stretch occupies residues 647–669; the sequence is LGELMAIINSTNVHYIRCIKPNS. 5 consecutive IQ domains span residues 781-801, 804-824, 829-849, 876-898, and 899-928; these read NEIC…LQYL, MESI…TRVD, TRAA…EYYR, MLMA…DYRT, and LKRS…EVEE. A coiled-coil region spans residues 938-1063; the sequence is GLLEEAIEFK…LAFIENVIAQ (126 aa). One can recognise a Dilute domain in the interval 1164–1419; the sequence is SKVLLTVESI…LNYLANVIKR (256 aa).

Belongs to the TRAFAC class myosin-kinesin ATPase superfamily. Myosin family. In terms of assembly, interacts with SHE2 and SHE3.

Its subcellular location is the bud. Functionally, part of the mRNA localization machinery that restricts accumulation of certain proteins to the bud and in the daughter cell. Recruited to specific mRNAs including the ASH1 mRNA, coding for a repressor of the HO endonuclease, via its interaction with SHE3. The protein is Myosin-4 (MYO4) of Saccharomyces cerevisiae (strain ATCC 204508 / S288c) (Baker's yeast).